Reading from the N-terminus, the 552-residue chain is Dihydroxy-acid dehydratase (552 aa).

Asp78 contributes to the Mg(2+) binding site. Cys119 contacts [2Fe-2S] cluster. Mg(2+)-binding residues include Asp120 and Lys121. Lys121 carries the post-translational modification N6-carboxylysine. Cys191 is a [2Fe-2S] cluster binding site. Glu442 lines the Mg(2+) pocket. The Proton acceptor role is filled by Ser468.

The protein belongs to the IlvD/Edd family. Homodimer. [2Fe-2S] cluster is required as a cofactor. Requires Mg(2+) as cofactor.

It carries out the reaction (2R)-2,3-dihydroxy-3-methylbutanoate = 3-methyl-2-oxobutanoate + H2O. The catalysed reaction is (2R,3R)-2,3-dihydroxy-3-methylpentanoate = (S)-3-methyl-2-oxopentanoate + H2O. The protein operates within amino-acid biosynthesis; L-isoleucine biosynthesis; L-isoleucine from 2-oxobutanoate: step 3/4. Its pathway is amino-acid biosynthesis; L-valine biosynthesis; L-valine from pyruvate: step 3/4. Functionally, functions in the biosynthesis of branched-chain amino acids. Catalyzes the dehydration of (2R,3R)-2,3-dihydroxy-3-methylpentanoate (2,3-dihydroxy-3-methylvalerate) into 2-oxo-3-methylpentanoate (2-oxo-3-methylvalerate) and of (2R)-2,3-dihydroxy-3-methylbutanoate (2,3-dihydroxyisovalerate) into 2-oxo-3-methylbutanoate (2-oxoisovalerate), the penultimate precursor to L-isoleucine and L-valine, respectively. This chain is Dihydroxy-acid dehydratase, found in Ruminiclostridium cellulolyticum (strain ATCC 35319 / DSM 5812 / JCM 6584 / H10) (Clostridium cellulolyticum).